The chain runs to 56 residues: Attractin (56 aa).

Cystine bridges form between C4/C41, C13/C33, and C20/C26. The N-linked (GlcNAc...) asparagine glycan is linked to N25.

Produced by the albumen gland of the egg cordons.

It localises to the secreted. Water-borne pheromone that attract the marine mollusk Aplysia into breeding aggregations and coordinate male and female reproductive behavior within the aggregation. This is Attractin (ATT) from Aplysia depilans (Sea hare).